The following is a 558-amino-acid chain: Dihydroxy-acid dehydratase (558 aa).

Cys-49 serves as a coordination point for [2Fe-2S] cluster. A Mg(2+)-binding site is contributed by Asp-81. [2Fe-2S] cluster is bound at residue Cys-122. Mg(2+)-binding residues include Asp-123 and Lys-124. Lys-124 is subject to N6-carboxylysine. Position 194 (Cys-194) interacts with [2Fe-2S] cluster. A Mg(2+)-binding site is contributed by Glu-446. Ser-472 serves as the catalytic Proton acceptor.

This sequence belongs to the IlvD/Edd family. In terms of assembly, homodimer. The cofactor is [2Fe-2S] cluster. Requires Mg(2+) as cofactor.

It catalyses the reaction (2R)-2,3-dihydroxy-3-methylbutanoate = 3-methyl-2-oxobutanoate + H2O. The catalysed reaction is (2R,3R)-2,3-dihydroxy-3-methylpentanoate = (S)-3-methyl-2-oxopentanoate + H2O. It participates in amino-acid biosynthesis; L-isoleucine biosynthesis; L-isoleucine from 2-oxobutanoate: step 3/4. It functions in the pathway amino-acid biosynthesis; L-valine biosynthesis; L-valine from pyruvate: step 3/4. Functions in the biosynthesis of branched-chain amino acids. Catalyzes the dehydration of (2R,3R)-2,3-dihydroxy-3-methylpentanoate (2,3-dihydroxy-3-methylvalerate) into 2-oxo-3-methylpentanoate (2-oxo-3-methylvalerate) and of (2R)-2,3-dihydroxy-3-methylbutanoate (2,3-dihydroxyisovalerate) into 2-oxo-3-methylbutanoate (2-oxoisovalerate), the penultimate precursor to L-isoleucine and L-valine, respectively. This is Dihydroxy-acid dehydratase from Synechococcus sp. (strain RCC307).